We begin with the raw amino-acid sequence, 104 residues long: DNA-directed RNA polymerase subunit omega (104 aa).

The disordered stretch occupies residues 76-104 (IEEEKRRKEEEEKKIKEQIAKEKEDGEKI).

The protein belongs to the RNA polymerase subunit omega family. As to quaternary structure, the RNAP catalytic core consists of 2 alpha, 1 beta, 1 beta' and 1 omega subunit. When a sigma factor is associated with the core the holoenzyme is formed, which can initiate transcription.

The catalysed reaction is RNA(n) + a ribonucleoside 5'-triphosphate = RNA(n+1) + diphosphate. Its function is as follows. Promotes RNA polymerase assembly. Latches the N- and C-terminal regions of the beta' subunit thereby facilitating its interaction with the beta and alpha subunits. The protein is DNA-directed RNA polymerase subunit omega of Streptococcus pneumoniae (strain CGSP14).